A 101-amino-acid chain; its full sequence is opdI (101 aa).

Residues 30 to 49 (GGMGGALKIVFLGMMTYFIA) traverse the membrane as a helical segment. The segment at 56–101 (SQHPPTDFNAPVQSVPQRAQRPSDTRLQGPVLLASNHPSGDSASPE) is disordered. Polar residues-rich tracts occupy residues 66–81 (PVQSVPQRAQRPSDTR) and 91–101 (NHPSGDSASPE).

It is found in the membrane. In terms of biological role, part of the gene cluster that mediates the biosynthesis of oxopyrrolidines, polyketide-amino acid hybrid compounds with feature structures of tetramic acid. Does not seem to play a role in oxopyrrolidines A and B biosynthesis. The sequence is that of opdI from Penicillium oxalicum (strain 114-2 / CGMCC 5302) (Penicillium decumbens).